The chain runs to 77 residues: Acyl carrier protein (77 aa).

Residues 2 to 77 form the Carrier domain; it reads SDVADRVKKI…DAVKFISEAS (76 aa). Ser-37 is modified (O-(pantetheine 4'-phosphoryl)serine).

Belongs to the acyl carrier protein (ACP) family. 4'-phosphopantetheine is transferred from CoA to a specific serine of apo-ACP by AcpS. This modification is essential for activity because fatty acids are bound in thioester linkage to the sulfhydryl of the prosthetic group.

It localises to the cytoplasm. Its pathway is lipid metabolism; fatty acid biosynthesis. Carrier of the growing fatty acid chain in fatty acid biosynthesis. The sequence is that of Acyl carrier protein from Ruegeria pomeroyi (strain ATCC 700808 / DSM 15171 / DSS-3) (Silicibacter pomeroyi).